The chain runs to 677 residues: Methionine--tRNA ligase (677 aa).

Positions 15–25 (PYANGSIHLGH) match the 'HIGH' region motif. The Zn(2+) site is built by Cys146, Cys149, Cys159, and Cys162. Residues 333–337 (KMSKS) carry the 'KMSKS' region motif. ATP is bound at residue Lys336. One can recognise a tRNA-binding domain in the interval 575 to 677 (DFAKVDLRVA…DGAKPGQQVK (103 aa)).

The protein belongs to the class-I aminoacyl-tRNA synthetase family. MetG type 1 subfamily. In terms of assembly, homodimer. The cofactor is Zn(2+).

The protein resides in the cytoplasm. It carries out the reaction tRNA(Met) + L-methionine + ATP = L-methionyl-tRNA(Met) + AMP + diphosphate. Functionally, is required not only for elongation of protein synthesis but also for the initiation of all mRNA translation through initiator tRNA(fMet) aminoacylation. This Salmonella schwarzengrund (strain CVM19633) protein is Methionine--tRNA ligase.